A 474-amino-acid chain; its full sequence is PRAME family member 7 (474 aa).

The LRR 1; degenerate repeat unit spans residues 97-122 (QSKLQVLDLRNVDENFCDIFSGATAS). Residues 177-201 (HVCCKELQVFGMPIHSIIEVLNMVE) form an LRR 2; degenerate repeat. The LRR 3; degenerate repeat unit spans residues 202 to 228 (LDCIQEVEVCCPWELSTLVKFAPYLGQ). Residues 229–264 (MRNLRKLVLFNIRASACIPPDNKGQFIARFTSQFLK) form an LRR 4; degenerate repeat. 5 LRR repeats span residues 265–290 (LDYF…LRCL), 291–322 (QASL…RQLK), 323–341 (ELDL…PLTG), 347–374 (VATL…VLSR), and 375–399 (CSQL…LLRH).

The protein belongs to the PRAME family.

This Homo sapiens (Human) protein is PRAME family member 7.